The sequence spans 334 residues: Glucokinase-like protein XF_1460 (334 aa).

Residue 18-23 coordinates ATP; it reads ADVGGT.

It belongs to the bacterial glucokinase family.

The chain is Glucokinase-like protein XF_1460 from Xylella fastidiosa (strain 9a5c).